Here is a 1784-residue protein sequence, read N- to C-terminus: Protein mel-28 (1784 aa).

The required for nuclear envelope and kinetochore localization stretch occupies residues 1-956; it reads MDNENSSIFK…QNDDEDMPEV (956 aa). Residues 566 to 778 form a required for association with mitotic chromosomes region; it reads GKIEEFCQLA…TSPEDSEHSE (213 aa). Residues 846–1071 are important for nuclear localization; it reads APMTVTIGKH…HNSILKTAKG (226 aa). Disordered stretches follow at residues 945–994 and 1115–1784; these read KVQN…AKRI and ETMT…RAKQ. A compositionally biased stretch (basic and acidic residues) spans 1126–1149; it reads GKHDEEKDSEKNVVDEMEEVKDQE. Acidic residues-rich tracts occupy residues 1222 to 1232 and 1266 to 1278; these read LEEEGEDEDIW and VNEEEVVESEEVQ. Residues 1239 to 1601 form a chromatin binding region; that stretch reads FEVQMDEDCE…TTVDPSSSAL (363 aa). Positions 1279–1293 are enriched in basic and acidic residues; it reads QDAKEPEKTEKRQEE. A compositionally biased stretch (low complexity) spans 1297–1306; the sequence is EVMQPVIPEE. Over residues 1321–1336 the composition is skewed to acidic residues; that stretch reads ELQEEPDIVPTGDEDT. Positions 1337–1351 are enriched in basic and acidic residues; the sequence is ADKVQEQAVEEDRPP. Polar residues predominate over residues 1352–1366; it reads SRNTRSSSVQKSTSQ. Basic and acidic residues predominate over residues 1367–1382; it reads VEDRDPKELVEEERPP. Over residues 1383-1398 the composition is skewed to polar residues; it reads SRNTRSASVQKSSNQE. The segment covering 1428 to 1444 has biased composition (basic and acidic residues); that stretch reads KVKDQKPEELIEEDRPP. A compositionally biased stretch (polar residues) spans 1445-1459; that stretch reads SRNTRSASAQKTVAA. Residues 1533-1546 show a composition bias toward low complexity; it reads AAASTSSSRAGSVT. Over residues 1566–1576 the composition is skewed to acidic residues; that stretch reads VQEEEEEEAEE. A compositionally biased stretch (polar residues) spans 1581–1606; that stretch reads SRSTRSASVKNTTVDPSSSALASTKR. Residues 1601 to 1784 form an important for nuclear localization region; sequence LASTKRTTSR…LLRSARRAKQ (184 aa). Residues 1630 to 1642 constitute a DNA-binding region (a.T hook 1); sequence TPKRGRPAKKDAG. Residues 1630–1784 form a required for chromosome segregation, nuclear growth, nucleoplasmic accumulation and cell cycle timing, but not required for nuclear envelope and kinetochore localization region; it reads TPKRGRPAKK…LLRSARRAKQ (155 aa). The span at 1716-1735 shows a compositional bias: polar residues; the sequence is AGTSKQSRSVTRSRASSIDV. A DNA-binding region (a.T hook 2) is located at residues 1746 to 1758; the sequence is KRGRGRPPKTVLE.

In terms of tissue distribution, ubiquitously expressed (at protein level).

The protein resides in the nucleus. The protein localises to the nucleoplasm. Its subcellular location is the nucleus envelope. It is found in the nucleus inner membrane. It localises to the nuclear pore complex. The protein resides in the chromosome. The protein localises to the centromere. Its subcellular location is the kinetochore. Its function is as follows. Nuclear envelope protein which has essential roles in assembly of nuclear pore complexes and in chromatin maintenance during the cell cycle. Appears to be a stable structural component of the nuclear envelope during interphase. In dividing cells, localizes to kinetochores during early stages of mitosis and then to chromatin during late mitosis. Important for several mitotic processes including chromosome condensation, kinetochore assembly, chromosome segregation and cell-cycle timing. In postmitotic cells, plays a role in the early steps of nuclear pore complex assembly by recruiting the nucleoporins npp-10 and npp-5 to chromatin. Also involved in meiotic chromosome segregation. May function downstream of the Ran GTPase signaling pathway. This chain is Protein mel-28, found in Caenorhabditis elegans.